Consider the following 515-residue polypeptide: ATP synthase subunit alpha (515 aa).

171 to 178 (GDRQTGKT) serves as a coordination point for ATP.

The protein belongs to the ATPase alpha/beta chains family. F-type ATPases have 2 components, CF(1) - the catalytic core - and CF(0) - the membrane proton channel. CF(1) has five subunits: alpha(3), beta(3), gamma(1), delta(1), epsilon(1). CF(0) has three main subunits: a(1), b(2) and c(9-12). The alpha and beta chains form an alternating ring which encloses part of the gamma chain. CF(1) is attached to CF(0) by a central stalk formed by the gamma and epsilon chains, while a peripheral stalk is formed by the delta and b chains.

It is found in the cell inner membrane. The enzyme catalyses ATP + H2O + 4 H(+)(in) = ADP + phosphate + 5 H(+)(out). Functionally, produces ATP from ADP in the presence of a proton gradient across the membrane. The alpha chain is a regulatory subunit. This Xanthomonas campestris pv. campestris (strain 8004) protein is ATP synthase subunit alpha.